The primary structure comprises 74 residues: Exodeoxyribonuclease 7 small subunit (74 aa).

The protein belongs to the XseB family. Heterooligomer composed of large and small subunits.

Its subcellular location is the cytoplasm. It catalyses the reaction Exonucleolytic cleavage in either 5'- to 3'- or 3'- to 5'-direction to yield nucleoside 5'-phosphates.. Its function is as follows. Bidirectionally degrades single-stranded DNA into large acid-insoluble oligonucleotides, which are then degraded further into small acid-soluble oligonucleotides. This is Exodeoxyribonuclease 7 small subunit from Haemophilus ducreyi (strain 35000HP / ATCC 700724).